An 88-amino-acid chain; its full sequence is Small ribosomal subunit protein bS20 (88 aa).

A compositionally biased stretch (basic residues) spans 1–21; it reads MANSKSAKKRALQSEKRRQHN. The disordered stretch occupies residues 1-27; the sequence is MANSKSAKKRALQSEKRRQHNASRSSM.

Belongs to the bacterial ribosomal protein bS20 family.

Its function is as follows. Binds directly to 16S ribosomal RNA. This chain is Small ribosomal subunit protein bS20, found in Shewanella piezotolerans (strain WP3 / JCM 13877).